Consider the following 328-residue polypeptide: Flotillin-like protein FloA (328 aa).

A run of 2 helical transmembrane segments spans residues 9–29 (LLIT…VPVG) and 30–50 (LWIS…IGMR).

This sequence belongs to the flotillin-like FloA family. Homooligomerizes.

The protein localises to the cell membrane. The protein resides in the membrane raft. In terms of biological role, found in functional membrane microdomains (FMM) that may be equivalent to eukaryotic membrane rafts. FMMs are highly dynamic and increase in number as cells age. Flotillins are thought to be important factors in membrane fluidity. This chain is Flotillin-like protein FloA, found in Exiguobacterium sp. (strain ATCC BAA-1283 / AT1b).